Reading from the N-terminus, the 698-residue chain is Inner centromere protein SLI15 (698 aa).

Phosphoserine is present on Ser-268. Disordered regions lie at residues 365–390 (KNKITKNNSPKGKNSRKSSIPRFDKT), 405–444 (EQKKKSKHSSDVHKTGSRPHSISPTKISVDSSSPSKEVKN), and 455–474 (RPTKASISPNKNKNLTTSQT). 2 stretches are compositionally biased toward polar residues: residues 422-439 (RPHSISPTKISVDSSSPS) and 459-474 (ASISPNKNKNLTTSQT). Ser-489 is modified (phosphoserine). The segment at 535–560 (IMRSQQEHHRRKQEKQKRMSHLEQDL) is disordered. The span at 550–560 (QKRMSHLEQDL) shows a compositional bias: basic and acidic residues.

It belongs to the INCENP family. In terms of assembly, component of the CPC complex at least composed of IPL1, BIR1 and SLI15. Post-translationally, phosphorylated by serine/threonine protein kinase IPL1.

The protein resides in the nucleus. Its subcellular location is the cytoplasm. It localises to the cytoskeleton. The protein localises to the spindle. It is found in the chromosome. The protein resides in the centromere. Its subcellular location is the kinetochore. Its function is as follows. Component of the chromosomal passenger complex (CPC), a complex that acts as a key regulator of mitosis. Stimulates IPL1 kinase activity and facilitates its association with the mitotic spindle. Has a role in attaching the kinetochores to the microtubules and ensuring that sister kinetochores connect to opposite poles. The sequence is that of Inner centromere protein SLI15 (SLI15) from Saccharomyces cerevisiae (strain ATCC 204508 / S288c) (Baker's yeast).